Consider the following 986-residue polypeptide: Resact receptor (986 aa).

Positions 1 to 21 are cleaved as a signal peptide; that stretch reads MATTRLLFLLVVAVMITMVRS. Over 22-507 the chain is Extracellular; it reads ATLHYNPTVI…GELCTNWGLY (486 aa). N-linked (GlcNAc...) asparagine glycans are attached at residues N185, N361, and N410. A helical membrane pass occupies residues 508–528; that stretch reads LGTLIPAFIIIFGGGLGYYIY. The Cytoplasmic portion of the chain corresponds to 529 to 986; the sequence is RKRAYEAALD…SHSCSALHSS (458 aa). Positions 568-836 constitute a Protein kinase domain; sequence LSAISVISNA…PNIIEVRTML (269 aa).

The protein resides in the membrane. It carries out the reaction GTP = 3',5'-cyclic GMP + diphosphate. In terms of biological role, implicated as a cell-surface receptor on spermatozoa for 'resact' a chemotactic peptide, and on various other cells as a receptor for atrial natriuretic peptide. This chain is Resact receptor, found in Arbacia punctulata (Punctuate sea urchin).